We begin with the raw amino-acid sequence, 102 residues long: Putative ubiquitin-like protein FUBI-like protein ENSP00000310146 (102 aa).

The 77-residue stretch at 23–99 (LCPQVAYVRA…LEVVGRRLGV (77 aa)) folds into the Ubiquitin-like domain.

This Homo sapiens (Human) protein is Putative ubiquitin-like protein FUBI-like protein ENSP00000310146.